Here is an 802-residue protein sequence, read N- to C-terminus: Elongation factor G, mitochondrial (802 aa).

Residues 1–24 constitute a mitochondrion transit peptide; it reads MRYPSLARLPRRALSGLARAPVRL. The 288-residue stretch at 100–387 folds into the tr-type G domain; sequence SRVRNIGIAA…GVIDYLPNPS (288 aa). Residues 109-116, 185-189, and 239-242 each bind GTP; these read AHIDSGKT, DTPGH, and NKMD.

This sequence belongs to the TRAFAC class translation factor GTPase superfamily. Classic translation factor GTPase family. EF-G/EF-2 subfamily.

Its subcellular location is the mitochondrion. Its pathway is protein biosynthesis; polypeptide chain elongation. In terms of biological role, mitochondrial GTPase that catalyzes the GTP-dependent ribosomal translocation step during translation elongation. During this step, the ribosome changes from the pre-translocational (PRE) to the post-translocational (POST) state as the newly formed A-site-bound peptidyl-tRNA and P-site-bound deacylated tRNA move to the P and E sites, respectively. Catalyzes the coordinated movement of the two tRNA molecules, the mRNA and conformational changes in the ribosome. The sequence is that of Elongation factor G, mitochondrial (mef1) from Aspergillus terreus (strain NIH 2624 / FGSC A1156).